A 94-amino-acid polypeptide reads, in one-letter code: (2R)-sulfolactate sulfo-lyase subunit alpha (94 aa).

The 75-residue stretch at 16–90 folds into the AFP-like domain; the sequence is VVVVEGVEAG…GEHVHVHNVK (75 aa).

As to quaternary structure, (2R)-sulfolactate sulfo-lyase is composed of a SuyA and a SuyB subunit.

It localises to the cytoplasm. It catalyses the reaction (2R)-3-sulfolactate = sulfite + pyruvate + H(+). Together with SuyB, desulfonates sulfolactate to pyruvate and sulfite. This chain is (2R)-sulfolactate sulfo-lyase subunit alpha (suyA), found in Chromohalobacter salexigens (strain ATCC BAA-138 / DSM 3043 / CIP 106854 / NCIMB 13768 / 1H11).